The chain runs to 484 residues: tRNA-2-methylthio-N(6)-dimethylallyladenosine synthase (484 aa).

Positions 36–153 constitute an MTTase N-terminal domain; that stretch reads GKLYIKTHGC…LPELIRARRE (118 aa). 6 residues coordinate [4Fe-4S] cluster: C45, C82, C116, C190, C194, and C197. Residues 176 to 415 form the Radical SAM core domain; the sequence is RAEGPSAFVS…HISAHAASIS (240 aa). The TRAM domain occupies 416–479; that stretch reads QSMVGSVQRV…SNSLRGRIQL (64 aa). The disordered stretch occupies residues 428–450; the sequence is EGPSRRDPNELTGKSENMRPVNF.

The protein belongs to the methylthiotransferase family. MiaB subfamily. As to quaternary structure, monomer. [4Fe-4S] cluster serves as cofactor.

It localises to the cytoplasm. It carries out the reaction N(6)-dimethylallyladenosine(37) in tRNA + (sulfur carrier)-SH + AH2 + 2 S-adenosyl-L-methionine = 2-methylsulfanyl-N(6)-dimethylallyladenosine(37) in tRNA + (sulfur carrier)-H + 5'-deoxyadenosine + L-methionine + A + S-adenosyl-L-homocysteine + 2 H(+). Catalyzes the methylthiolation of N6-(dimethylallyl)adenosine (i(6)A), leading to the formation of 2-methylthio-N6-(dimethylallyl)adenosine (ms(2)i(6)A) at position 37 in tRNAs that read codons beginning with uridine. This chain is tRNA-2-methylthio-N(6)-dimethylallyladenosine synthase, found in Xanthomonas oryzae pv. oryzae (strain KACC10331 / KXO85).